The following is a 647-amino-acid chain: Threonine--tRNA ligase (647 aa).

Residues 1 to 63 enclose the TGS domain; sequence MYMIQLTFPD…EHDGKIELVM (63 aa). The catalytic stretch occupies residues 247-544; that stretch reads DHRKLGKELD…LIEEYKGAFP (298 aa). Zn(2+) is bound by residues Cys-340, His-391, and His-521.

It belongs to the class-II aminoacyl-tRNA synthetase family. As to quaternary structure, homodimer. It depends on Zn(2+) as a cofactor.

Its subcellular location is the cytoplasm. It catalyses the reaction tRNA(Thr) + L-threonine + ATP = L-threonyl-tRNA(Thr) + AMP + diphosphate + H(+). Catalyzes the attachment of threonine to tRNA(Thr) in a two-step reaction: L-threonine is first activated by ATP to form Thr-AMP and then transferred to the acceptor end of tRNA(Thr). Also edits incorrectly charged L-seryl-tRNA(Thr). In Exiguobacterium sp. (strain ATCC BAA-1283 / AT1b), this protein is Threonine--tRNA ligase.